The chain runs to 348 residues: Putative transport protein HI_0338 (348 aa).

The next 9 helical transmembrane spans lie at 7-27 (LHRTLLGIAAVIIILAGVKLA), 28-48 (AEIVVPFLLSLFIAIICSPII), 60-80 (LAITLLFVLISLVFFFLVGLI), 139-159 (VLLNFSGVVSNVFVLVLVVIF), 196-216 (VIGYLGIKSITSLLTGVGVFI), 223-243 (VQYAILWATLSFLLNYIPNIG), 245-265 (IIAAIPIIVQALLLNGFGIGF), 267-287 (VAIGVIAINMVVGNIIEPKMM), and 296-316 (LVVFLSLLFWGWLLGTVGMLL).

It belongs to the autoinducer-2 exporter (AI-2E) (TC 2.A.86) family.

The protein resides in the cell membrane. In Haemophilus influenzae (strain ATCC 51907 / DSM 11121 / KW20 / Rd), this protein is Putative transport protein HI_0338.